We begin with the raw amino-acid sequence, 421 residues long: Granaticin polyketide putative beta-ketoacyl synthase 1 (421 aa).

Residues 2–416 (TRRVVITGVG…GFQSAMVLHR (415 aa)) enclose the Ketosynthase family 3 (KS3) domain. Active-site for beta-ketoacyl synthase activity residues include Cys169, His309, and His346.

Belongs to the thiolase-like superfamily. Beta-ketoacyl-ACP synthases family.

The protein operates within antibiotic biosynthesis; granaticin biosynthesis. This Streptomyces violaceoruber protein is Granaticin polyketide putative beta-ketoacyl synthase 1 (gra-orf1).